The following is a 242-amino-acid chain: uncharacterized protein (242 aa).

An N-terminal signal peptide occupies residues 1–20 (MTFIKGLPLMLLTISLGCNA).

The protein belongs to the periplasmic pilus chaperone family.

The protein resides in the periplasm. In terms of biological role, could be required for the biogenesis of the putative YbgD fimbria. This is an uncharacterized protein from Escherichia coli (strain K12).